The following is a 329-amino-acid chain: tRNA (guanine(10)-N2)-dimethyltransferase (329 aa).

The 104-residue stretch at 40–143 (NVENVEIFER…KLWIGIRIRE (104 aa)) folds into the THUMP domain.

This sequence belongs to the methyltransferase superfamily. Trm-G10 family. In terms of assembly, monomer.

The protein localises to the cytoplasm. It catalyses the reaction guanosine(10) in tRNA + 2 S-adenosyl-L-methionine = N(2)-dimethylguanosine(10) in tRNA + 2 S-adenosyl-L-homocysteine + 2 H(+). In terms of biological role, catalyzes the adenosylmethionine-dependent methylation of the exocyclic amino group (N(2)) of guanosine at position 10 of various tRNAs. Acts via a two-step process that leads to the formation of either N(2)-monomethyl (m(2)G) or N(2)-dimethylguanosine (m(2)(2)G). This chain is tRNA (guanine(10)-N2)-dimethyltransferase (trmG10), found in Pyrococcus abyssi (strain GE5 / Orsay).